A 471-amino-acid polypeptide reads, in one-letter code: Dynein regulatory complex subunit 4 (471 aa).

Residues 1-24 (MAPKKKGTKKESKKDAVATGDIEG) form a disordered region. Coiled coils occupy residues 23–239 (EGAS…YNDI) and 282–425 (LSRA…DVAK).

It belongs to the DRC4 family. As to quaternary structure, component of the nexin-dynein regulatory complex (N-DRC). Interacts with DRC1, DRC2 and DRC5.

It is found in the cytoplasm. Its subcellular location is the cytoskeleton. The protein resides in the flagellum axoneme. The protein localises to the flagellum basal body. Its function is as follows. Component of the nexin-dynein regulatory complex (N-DRC), a key regulator of ciliary/flagellar motility which maintains the alignment and integrity of the distal axoneme and regulates microtubule sliding in motile axonemes. Plays an important role in the assembly of the N-DRC linker. The sequence is that of Dynein regulatory complex subunit 4 from Chlamydomonas reinhardtii (Chlamydomonas smithii).